A 404-amino-acid polypeptide reads, in one-letter code: Cysteine desulfurase IscS (404 aa).

Residues Ala-75–Thr-76, Asn-155, Gln-183, and Ser-203–His-205 contribute to the pyridoxal 5'-phosphate site. Position 206 is an N6-(pyridoxal phosphate)lysine (Lys-206). Thr-243 lines the pyridoxal 5'-phosphate pocket. Cys-328 functions as the Cysteine persulfide intermediate in the catalytic mechanism. Cys-328 provides a ligand contact to [2Fe-2S] cluster.

This sequence belongs to the class-V pyridoxal-phosphate-dependent aminotransferase family. NifS/IscS subfamily. Homodimer. Forms a heterotetramer with IscU, interacts with other sulfur acceptors. Requires pyridoxal 5'-phosphate as cofactor.

It localises to the cytoplasm. It catalyses the reaction (sulfur carrier)-H + L-cysteine = (sulfur carrier)-SH + L-alanine. The protein operates within cofactor biosynthesis; iron-sulfur cluster biosynthesis. Master enzyme that delivers sulfur to a number of partners involved in Fe-S cluster assembly, tRNA modification or cofactor biosynthesis. Catalyzes the removal of elemental sulfur atoms from cysteine to produce alanine. Functions as a sulfur delivery protein for Fe-S cluster synthesis onto IscU, an Fe-S scaffold assembly protein, as well as other S acceptor proteins. The polypeptide is Cysteine desulfurase IscS (Pseudomonas putida (strain ATCC 700007 / DSM 6899 / JCM 31910 / BCRC 17059 / LMG 24140 / F1)).